We begin with the raw amino-acid sequence, 108 residues long: uncharacterized protein (108 aa).

Residues 1 to 21 (MFRSLFLAAALMAFTPLAANA) form the signal peptide.

It to E.coli YaaX.

This is an uncharacterized protein from Escherichia coli O157:H7.